We begin with the raw amino-acid sequence, 416 residues long: Enterobactin exporter EntS (416 aa).

At 1 to 21 (MNKQSWLLNLSLLKTHPAFRA) the chain is on the cytoplasmic side. Residues 22–42 (VFLARFISIVSLGLLGVAVPV) traverse the membrane as a helical segment. Topologically, residues 43–55 (QIQMMTHSTWQVG) are periplasmic. A helical transmembrane segment spans residues 56 to 76 (LSVTLTGGAMFVGLMVGGVLA). Residues 77 to 83 (DRYERKK) are Cytoplasmic-facing. Residues 84–104 (VILLARGTCGIGFIGLCLNAL) form a helical membrane-spanning segment. Over 105 to 109 (LPEPS) the chain is Periplasmic. A helical membrane pass occupies residues 110-130 (LLAIYLLGLWDGFFASLGVTA). Residues 131–156 (LLAATPALVGRENLMQAGAITMLTVR) are Cytoplasmic-facing. The helical transmembrane segment at 157–177 (LGSVISPMIGGLLLATGGVAW) threads the bilayer. Residue asparagine 178 is a topological domain, periplasmic. Residues 179 to 199 (YGLAAAGTFITLLPLLSLPAL) traverse the membrane as a helical segment. Topologically, residues 200–218 (PPPPQPREHPLKSLLAGFR) are cytoplasmic. The helical transmembrane segment at 219-239 (FLLASPLVGGIALLGGLLTMA) threads the bilayer. Residues 240–256 (SAVRVLYPALADNWQMS) lie on the Periplasmic side of the membrane. The helical transmembrane segment at 257-277 (AAQIGFLYAAIPLGAAIGALT) threads the bilayer. Residues 278–287 (SGKLAHSARP) lie on the Cytoplasmic side of the membrane. A helical transmembrane segment spans residues 288–307 (GLLMLLSTLGSFLAIGLFGL). Residues 308–313 (MPMWIL) lie on the Periplasmic side of the membrane. The chain crosses the membrane as a helical span at residues 314–336 (GVVCLALFGWLSAVSSLLQYTML). At 337–356 (QTQTPEAMLGRINGLWTAQN) the chain is on the cytoplasmic side. The chain crosses the membrane as a helical span at residues 357 to 377 (VTGDAIGAALLGGLGAMMTPV). A topological domain (periplasmic) is located at residue alanine 378. Residues 379 to 399 (SASASGFGLLIIGVLLLLVLV) form a helical membrane-spanning segment. Residues 400-416 (ELRHFRQTPPQVTASDS) are Cytoplasmic-facing.

Belongs to the major facilitator superfamily. EntS (TC 2.A.1.38) family.

It is found in the cell inner membrane. In terms of biological role, component of an export pathway for enterobactin. This Escherichia coli (strain K12 / MC4100 / BW2952) protein is Enterobactin exporter EntS.